Here is a 593-residue protein sequence, read N- to C-terminus: Inactive metallocarboxypeptidase ECM14 (593 aa).

Residues 1–22 (MHVTVQLSLLLSLASSLPLVSA) form the signal peptide. Positions 23–175 (IPQHDGQAYT…QAIYESYPKN (153 aa)) are excised as a propeptide. Disordered regions lie at residues 75 to 98 (VPQRGKDSETKTGKQSEAASKAPA) and 172 to 202 (YPKNNPSSPSHPGATTRRFSPSASTPESQPH). Positions 78-88 (RGKDSETKTGK) are enriched in basic and acidic residues. The span at 188–199 (RRFSPSASTPES) shows a compositional bias: polar residues. Residues 211–537 (DYQPLSVLLP…HAVVAMGKFL (327 aa)) form the Peptidase M14 domain. His-276 and Glu-279 together coordinate Zn(2+). Residues 276 to 279 (HARE), Arg-334, and 351 to 352 (DR) each bind substrate. Cys-345 and Cys-368 form a disulfide bridge. Asn-361 is a glycosylation site (N-linked (GlcNAc...) asparagine). His-408 contacts Zn(2+). Position 409–410 (409–410 (SY)) interacts with substrate. The interval 548–593 (DEPHAGEQTQDNSYDEDGDNLFRAQGGDPQVRFTRRNIGAHDDDSE) is disordered.

This sequence belongs to the peptidase M14 family. It depends on Zn(2+) as a cofactor.

The protein localises to the vacuole. The protein resides in the secreted. Its function is as follows. Inactive carboxypeptidase that may play a role in cell wall organization and biogenesis. The sequence is that of Inactive metallocarboxypeptidase ECM14 (ECM14) from Arthroderma otae (strain ATCC MYA-4605 / CBS 113480) (Microsporum canis).